The primary structure comprises 200 residues: Small ribosomal subunit protein eS8A (200 aa).

Positions 1-31 (MGISRDSRHKRSATGAKRAQFRKKRKFELGR) are disordered. Threonine 62 bears the Phosphothreonine mark. Residues serine 66, serine 69, serine 73, and serine 86 each carry the phosphoserine modification. Threonine 107 carries the phosphothreonine modification. Residues serine 154, serine 155, serine 158, and serine 161 each carry the phosphoserine modification.

This sequence belongs to the eukaryotic ribosomal protein eS8 family. Component of the small ribosomal subunit (SSU). Mature yeast ribosomes consist of a small (40S) and a large (60S) subunit. The 40S small subunit contains 1 molecule of ribosomal RNA (18S rRNA) and 33 different proteins (encoded by 57 genes). The large 60S subunit contains 3 rRNA molecules (25S, 5.8S and 5S rRNA) and 46 different proteins (encoded by 81 genes).

It is found in the cytoplasm. Functionally, component of the ribosome, a large ribonucleoprotein complex responsible for the synthesis of proteins in the cell. The small ribosomal subunit (SSU) binds messenger RNAs (mRNAs) and translates the encoded message by selecting cognate aminoacyl-transfer RNA (tRNA) molecules. The large subunit (LSU) contains the ribosomal catalytic site termed the peptidyl transferase center (PTC), which catalyzes the formation of peptide bonds, thereby polymerizing the amino acids delivered by tRNAs into a polypeptide chain. The nascent polypeptides leave the ribosome through a tunnel in the LSU and interact with protein factors that function in enzymatic processing, targeting, and the membrane insertion of nascent chains at the exit of the ribosomal tunnel. In Saccharomyces cerevisiae (strain ATCC 204508 / S288c) (Baker's yeast), this protein is Small ribosomal subunit protein eS8A.